A 621-amino-acid chain; its full sequence is F-box/LRR-repeat protein 4 (621 aa).

An Asymmetric dimethylarginine modification is found at Arg28. An F-box domain is found at 277–332 (NGYFDKLPYELIQLILNHLTLPDLCRLAQTCKLLSQHCCDPLQYIHLNLQPYWAKL). 9 LRR repeats span residues 376–397 (ELVR…EVIS), 402–421 (NLQA…AFNH), 427–448 (SLKR…SILN), 452–474 (ELQH…ASMI), 480–501 (KLRT…AELA), 504–524 (CPLL…STGC), 532–558 (LPNL…ACNC), 559–583 (TRLQ…LLES), and 584–609 (CKDL…LNAS).

As to quaternary structure, part of a SCF (SKP1-CUL1-F-box) protein ligase complex. Interacts with VCP. Interacts with PPTC7; this interaction promotes destruction of BNIP3 and NIX and mitophagy suppression. In terms of tissue distribution, expressed in heart, kidney, liver, lung, pancreas, and placenta, but not in skeletal muscle.

It is found in the cytoplasm. The protein localises to the nucleus. Its subcellular location is the mitochondrion outer membrane. In terms of biological role, substrate-recognition component of the mitochondria-localized SCF-FBXL4 ubiquitin E3 ligase complex that plays a role in the restriction of mitophagy by controlling the degradation of BNIP3 and NIX mitophagy receptors. Rescues also mitochondrial injury through reverting hyperactivation of DRP1-mediated mitochondrial fission. In Homo sapiens (Human), this protein is F-box/LRR-repeat protein 4 (FBXL4).